The primary structure comprises 499 residues: Probable aspartyl protease At4g16563 (499 aa).

The N-terminal stretch at 1–26 (MKTCLIFFLYTTILQYYFHFSVSSLS) is a signal peptide. In terms of domain architecture, Peptidase A1 spans 83-487 (YLISLSVGSS…DLLNRRVGFA (405 aa)). Residue D101 is part of the active site. A disulfide bridge connects residues C111 and C119. Residues N175 and N211 are each glycosylated (N-linked (GlcNAc...) asparagine). D353 is an active-site residue. Cysteines 396 and 445 form a disulfide. 2 N-linked (GlcNAc...) asparagine glycosylation sites follow: N400 and N415.

The protein belongs to the peptidase A1 family.

This Arabidopsis thaliana (Mouse-ear cress) protein is Probable aspartyl protease At4g16563.